The sequence spans 40 residues: Small polypeptide DEVIL 6 (40 aa).

The segment at 9–40 is required for DVL/RTFL small polypeptide activity; sequence SSSRGLGGVLREQRAKLYIIKRCVVMLLCWQD. A helical transmembrane segment spans residues 12–28; sequence RGLGGVLREQRAKLYII.

Belongs to the DVL/RTFL small polypeptides family.

The protein localises to the cell membrane. Small polypeptide acting as a regulatory molecule which coordinates cellular responses required for differentiation, growth and development, probably by restricting polar cell proliferation in lateral organs and coordinating socket cell recruitment and differentiation at trichome sites. The polypeptide is Small polypeptide DEVIL 6 (Arabidopsis thaliana (Mouse-ear cress)).